Here is a 178-residue protein sequence, read N- to C-terminus: Large ribosomal subunit protein uL6 (178 aa).

This sequence belongs to the universal ribosomal protein uL6 family. Part of the 50S ribosomal subunit.

In terms of biological role, this protein binds to the 23S rRNA, and is important in its secondary structure. It is located near the subunit interface in the base of the L7/L12 stalk, and near the tRNA binding site of the peptidyltransferase center. The polypeptide is Large ribosomal subunit protein uL6 (Opitutus terrae (strain DSM 11246 / JCM 15787 / PB90-1)).